An 893-amino-acid chain; its full sequence is UPF0182 protein CLD_0809 (893 aa).

7 helical membrane passes run 9–29 (IPLF…NFII), 49–69 (AIII…WMYY), 94–114 (LFFI…SSSY), 154–174 (VIIS…FILE), 202–222 (LAIV…IKIW), 246–266 (FYKI…LSIV), and 273–293 (VSIC…ASFL).

It belongs to the UPF0182 family.

Its subcellular location is the cell membrane. This chain is UPF0182 protein CLD_0809, found in Clostridium botulinum (strain Okra / Type B1).